The chain runs to 334 residues: Formamidase (334 aa).

In terms of domain architecture, CN hydrolase spans 14–260; that stretch reads FLVAAIQFPV…WEIVTGEIYP (247 aa). Residue E60 is the Proton acceptor of the active site. K133 (proton donor) is an active-site residue. The Nucleophile role is filled by C166.

It belongs to the carbon-nitrogen hydrolase superfamily. Aliphatic amidase family.

It catalyses the reaction formamide + H2O = formate + NH4(+). Is an aliphatic amidase with a restricted substrate specificity, as it only hydrolyzes formamide. In Helicobacter pylori (strain J99 / ATCC 700824) (Campylobacter pylori J99), this protein is Formamidase.